The chain runs to 114 residues: T cell receptor beta variable 27 (114 aa).

The first 21 residues, 1–21, serve as a signal peptide directing secretion; that stretch reads MGPQLLGYVVLCLLGAGPLEA. The 93-residue stretch at 22-114 folds into the Ig-like domain; sequence QVTQNPRYLI…TSLYFCASSL (93 aa). The cysteines at positions 42 and 110 are disulfide-linked. Asn-103 carries N-linked (GlcNAc...) asparagine glycosylation.

Alpha-beta TR is a heterodimer composed of an alpha and beta chain; disulfide-linked. The alpha-beta TR is associated with the transmembrane signaling CD3 coreceptor proteins to form the TR-CD3 (TcR or TCR). The assembly of alpha-beta TR heterodimers with CD3 occurs in the endoplasmic reticulum where a single alpha-beta TR heterodimer associates with one CD3D-CD3E heterodimer, one CD3G-CD3E heterodimer and one CD247 homodimer forming a stable octameric structure. CD3D-CD3E and CD3G-CD3E heterodimers preferentially associate with TR alpha and TR beta chains, respectively. The association of the CD247 homodimer is the last step of TcR assembly in the endoplasmic reticulum and is required for transport to the cell surface.

It is found in the cell membrane. Functionally, v region of the variable domain of T cell receptor (TR) beta chain that participates in the antigen recognition. Alpha-beta T cell receptors are antigen specific receptors which are essential to the immune response and are present on the cell surface of T lymphocytes. Recognize peptide-major histocompatibility (MH) (pMH) complexes that are displayed by antigen presenting cells (APC), a prerequisite for efficient T cell adaptive immunity against pathogens. Binding of alpha-beta TR to pMH complex initiates TR-CD3 clustering on the cell surface and intracellular activation of LCK that phosphorylates the ITAM motifs of CD3G, CD3D, CD3E and CD247 enabling the recruitment of ZAP70. In turn ZAP70 phosphorylates LAT, which recruits numerous signaling molecules to form the LAT signalosome. The LAT signalosome propagates signal branching to three major signaling pathways, the calcium, the mitogen-activated protein kinase (MAPK) kinase and the nuclear factor NF-kappa-B (NF-kB) pathways, leading to the mobilization of transcription factors that are critical for gene expression and essential for T cell growth and differentiation. The T cell repertoire is generated in the thymus, by V-(D)-J rearrangement. This repertoire is then shaped by intrathymic selection events to generate a peripheral T cell pool of self-MH restricted, non-autoaggressive T cells. Post-thymic interaction of alpha-beta TR with the pMH complexes shapes TR structural and functional avidity. In Homo sapiens (Human), this protein is T cell receptor beta variable 27.